Consider the following 280-residue polypeptide: Phosphatidylglycerol--prolipoprotein diacylglyceryl transferase (280 aa).

3 helical membrane-spanning segments follow: residues 21-41, 54-74, and 88-108; these read WYGI…ISEG, LLLW…VIFE, and IWNG…VLLI. Arg-136 is a binding site for a 1,2-diacyl-sn-glycero-3-phospho-(1'-sn-glycerol). Transmembrane regions (helical) follow at residues 176–196, 206–226, and 236–256; these read QPTF…ILSL, GEVF…VEGM, and IIRV…ILWI.

This sequence belongs to the Lgt family.

The protein resides in the cell membrane. It carries out the reaction L-cysteinyl-[prolipoprotein] + a 1,2-diacyl-sn-glycero-3-phospho-(1'-sn-glycerol) = an S-1,2-diacyl-sn-glyceryl-L-cysteinyl-[prolipoprotein] + sn-glycerol 1-phosphate + H(+). The protein operates within protein modification; lipoprotein biosynthesis (diacylglyceryl transfer). In terms of biological role, catalyzes the transfer of the diacylglyceryl group from phosphatidylglycerol to the sulfhydryl group of the N-terminal cysteine of a prolipoprotein, the first step in the formation of mature lipoproteins. The polypeptide is Phosphatidylglycerol--prolipoprotein diacylglyceryl transferase (Lactobacillus acidophilus (strain ATCC 700396 / NCK56 / N2 / NCFM)).